The sequence spans 121 residues: Small ribosomal subunit protein uS13 (121 aa).

Residues Arg93 to Lys121 form a disordered region. A compositionally biased stretch (basic residues) spans Ala106–Lys121.

This sequence belongs to the universal ribosomal protein uS13 family. Part of the 30S ribosomal subunit. Forms a loose heterodimer with protein S19. Forms two bridges to the 50S subunit in the 70S ribosome.

Its function is as follows. Located at the top of the head of the 30S subunit, it contacts several helices of the 16S rRNA. In the 70S ribosome it contacts the 23S rRNA (bridge B1a) and protein L5 of the 50S subunit (bridge B1b), connecting the 2 subunits; these bridges are implicated in subunit movement. Contacts the tRNAs in the A and P-sites. The chain is Small ribosomal subunit protein uS13 from Bacillus subtilis (strain 168).